A 503-amino-acid polypeptide reads, in one-letter code: Arabinose import ATP-binding protein AraG 1 (503 aa).

ABC transporter domains follow at residues 5–240 (LRFD…MVGR) and 251–497 (RTLG…LPQT). 37–44 (GENGAGKS) serves as a coordination point for ATP.

Belongs to the ABC transporter superfamily. Arabinose importer (TC 3.A.1.2.2) family. In terms of assembly, the complex is composed of two ATP-binding proteins (AraG), two transmembrane proteins (AraH) and a solute-binding protein (AraF).

It localises to the cell inner membrane. It carries out the reaction L-arabinose(out) + ATP + H2O = L-arabinose(in) + ADP + phosphate + H(+). Functionally, part of the ABC transporter complex AraFGH involved in arabinose import. Responsible for energy coupling to the transport system. This is Arabinose import ATP-binding protein AraG 1 from Burkholderia cenocepacia (strain HI2424).